The primary structure comprises 702 residues: Elongation factor G (702 aa).

Positions 8–290 constitute a tr-type G domain; it reads ERYRNIGISA…AVIDYLPSPV (283 aa). GTP contacts are provided by residues 17-24, 88-92, and 142-145; these read AHIDAGKT, DTPGH, and NKMD.

It belongs to the TRAFAC class translation factor GTPase superfamily. Classic translation factor GTPase family. EF-G/EF-2 subfamily.

The protein resides in the cytoplasm. Its function is as follows. Catalyzes the GTP-dependent ribosomal translocation step during translation elongation. During this step, the ribosome changes from the pre-translocational (PRE) to the post-translocational (POST) state as the newly formed A-site-bound peptidyl-tRNA and P-site-bound deacylated tRNA move to the P and E sites, respectively. Catalyzes the coordinated movement of the two tRNA molecules, the mRNA and conformational changes in the ribosome. The sequence is that of Elongation factor G from Acidovorax ebreus (strain TPSY) (Diaphorobacter sp. (strain TPSY)).